A 382-amino-acid chain; its full sequence is Leucoanthocyanidin reductase (382 aa).

NADP(+)-binding positions include 19-25 (GGTGFIG), arginine 44, and lysine 52. The active-site Proton acceptor is the lysine 142. Arginine 146 serves as a coordination point for NADP(+).

Belongs to the NmrA-type oxidoreductase family. Isoflavone reductase subfamily. In terms of assembly, monomer.

The catalysed reaction is (2R,3S)-catechin + NADP(+) + H2O = (2R,3S,4S)-leucocyanidin + NADPH + H(+). It functions in the pathway flavonoid metabolism; proanthocyanidin biosynthesis. In terms of biological role, catalyzes the synthesis of catechin from 3,4-cis-leucocyanidin. Also synthesizes afzelechin and gallocatechin. This is Leucoanthocyanidin reductase (LAR) from Desmodium uncinatum (Silverleaf Spanish clover).